The sequence spans 448 residues: Bifunctional protein GlmU (448 aa).

Positions 1–230 (MRSCLSIVLA…FDNIVGINNC (230 aa)) are pyrophosphorylase. UDP-N-acetyl-alpha-D-glucosamine is bound by residues 9 to 12 (LAAG), lysine 23, glutamine 76, and 81 to 82 (GT). Aspartate 106 is a Mg(2+) binding site. The UDP-N-acetyl-alpha-D-glucosamine site is built by glycine 142, glutamate 156, asparagine 171, and asparagine 228. Asparagine 228 provides a ligand contact to Mg(2+). A linker region spans residues 231–251 (FELFEADSLWQKRKARDLMLS). The segment at 252 to 448 (GVTILKPETV…VRLSGNQQKK (197 aa)) is N-acetyltransferase. UDP-N-acetyl-alpha-D-glucosamine-binding residues include arginine 317 and lysine 335. Histidine 347 acts as the Proton acceptor in catalysis. Tyrosine 350 and asparagine 361 together coordinate UDP-N-acetyl-alpha-D-glucosamine. Acetyl-CoA is bound by residues alanine 364, 370–371 (NY), serine 389, serine 407, and arginine 424.

This sequence in the N-terminal section; belongs to the N-acetylglucosamine-1-phosphate uridyltransferase family. The protein in the C-terminal section; belongs to the transferase hexapeptide repeat family. As to quaternary structure, homotrimer. It depends on Mg(2+) as a cofactor.

The protein resides in the cytoplasm. The catalysed reaction is alpha-D-glucosamine 1-phosphate + acetyl-CoA = N-acetyl-alpha-D-glucosamine 1-phosphate + CoA + H(+). The enzyme catalyses N-acetyl-alpha-D-glucosamine 1-phosphate + UTP + H(+) = UDP-N-acetyl-alpha-D-glucosamine + diphosphate. It functions in the pathway nucleotide-sugar biosynthesis; UDP-N-acetyl-alpha-D-glucosamine biosynthesis; N-acetyl-alpha-D-glucosamine 1-phosphate from alpha-D-glucosamine 6-phosphate (route II): step 2/2. It participates in nucleotide-sugar biosynthesis; UDP-N-acetyl-alpha-D-glucosamine biosynthesis; UDP-N-acetyl-alpha-D-glucosamine from N-acetyl-alpha-D-glucosamine 1-phosphate: step 1/1. Its pathway is bacterial outer membrane biogenesis; LPS lipid A biosynthesis. Catalyzes the last two sequential reactions in the de novo biosynthetic pathway for UDP-N-acetylglucosamine (UDP-GlcNAc). The C-terminal domain catalyzes the transfer of acetyl group from acetyl coenzyme A to glucosamine-1-phosphate (GlcN-1-P) to produce N-acetylglucosamine-1-phosphate (GlcNAc-1-P), which is converted into UDP-GlcNAc by the transfer of uridine 5-monophosphate (from uridine 5-triphosphate), a reaction catalyzed by the N-terminal domain. The protein is Bifunctional protein GlmU of Bartonella quintana (strain Toulouse) (Rochalimaea quintana).